The sequence spans 1380 residues: DNA-directed RNA polymerase subunit beta (1380 aa).

This sequence belongs to the RNA polymerase beta chain family. As to quaternary structure, the RNAP catalytic core consists of 2 alpha, 1 beta, 1 beta' and 1 omega subunit. When a sigma factor is associated with the core the holoenzyme is formed, which can initiate transcription.

It catalyses the reaction RNA(n) + a ribonucleoside 5'-triphosphate = RNA(n+1) + diphosphate. Its function is as follows. DNA-dependent RNA polymerase catalyzes the transcription of DNA into RNA using the four ribonucleoside triphosphates as substrates. The polypeptide is DNA-directed RNA polymerase subunit beta (Ehrlichia ruminantium (strain Welgevonden)).